The chain runs to 395 residues: Protein pelota (395 aa).

The PGF motif signature appears at 210-212 (PGF). A disordered region spans residues 371–395 (PELEDSDDDDDEDGAAGGVADSDSD). Residues 372–384 (ELEDSDDDDDEDG) are compositionally biased toward acidic residues.

It belongs to the eukaryotic release factor 1 family. Pelota subfamily. In terms of assembly, component of the Pelota-HBS1L complex, also named Dom34-Hbs1 complex, composed of pelo and HBS1. Interacts with Pink1 and Cnot4; the interaction with Cnot4 appears to be Pink1-dependent. The cofactor is a divalent metal cation. Expressed in ovaries and muscles (at protein level). Expressed throughout all development stages.

The protein localises to the nucleus. It is found in the cytoplasm. Functionally, component of the Pelota-HBS1L complex, a complex that recognizes stalled ribosomes and triggers the No-Go Decay (NGD) pathway. In the Pelota-HBS1L complex, pelo recognizes ribosomes stalled at the 3' end of an mRNA and engages stalled ribosomes by destabilizing mRNA in the mRNA channel. Following ribosome-binding, the Pelota-HBS1L complex promotes recruitment of pix, which drives the disassembly of stalled ribosomes, followed by degradation of damaged mRNAs as part of the NGD pathway. Required prior to the first meiotic division for spindle formation and nuclear envelope breakdown during spermatogenesis. Together with HBS1, promotes spermatid individualization during spermatogenesis. Required for ovarian germ line stem cell self-renewal and oocyte development during oogenesis. Together with HSB1, required for transposon silencing in the ovary and testis. As part of the Pink1-regulated signaling, is recruited to damaged mitochondrial and is required for recruitment of autophagy receptors and induction of mitophagy. Required for normal eye patterning and for mitotic divisions in the ovary. This is Protein pelota (pelo) from Drosophila melanogaster (Fruit fly).